Consider the following 500-residue polypeptide: Mannan polymerase II complex ANP1 subunit (500 aa).

At 1–15 the chain is on the cytoplasmic side; that stretch reads MKYNNRKLSFNPTTV. Residues 16-27 form a helical; Signal-anchor for type II membrane protein membrane-spanning segment; it reads SIAGTLLTVFFL. Over 28–500 the chain is Lumenal; it reads TRLVLSFFSI…VPLDFDPDRN (473 aa). The tract at residues 424–500 is disordered; sequence WSEEGDGSEL…VPLDFDPDRN (77 aa). Positions 446 to 467 are enriched in low complexity; the sequence is QQQQQQQQQQQQQQQQQQQQQQ. Basic and acidic residues predominate over residues 489 to 500; sequence KEVPLDFDPDRN.

This sequence belongs to the ANP1/MMN9/VAN1 family. As to quaternary structure, component of the M-Pol II complex composed of ANP1, MNN9, MNN10, MNN11 and HOC1.

The protein localises to the endoplasmic reticulum membrane. It is found in the golgi apparatus membrane. Involved in the organization of the secretory pathway. Required to maintain a functional Golgi apparatus. Functionally, the M-Pol II complex possesses alpha-1,6-mannosyltransferase activity and is probably involved in the elongation of the mannan backbone of N-linked glycans on cell wall and periplasmic proteins. This is Mannan polymerase II complex ANP1 subunit (ANP1) from Saccharomyces cerevisiae (strain ATCC 204508 / S288c) (Baker's yeast).